Here is a 331-residue protein sequence, read N- to C-terminus: RNA/RNP complex-1-interacting phosphatase (331 aa).

Residues 61–208 (FEKHLAPEEC…LRNGPIRKNW (148 aa)) form the Tyrosine-protein phosphatase domain. The Phosphocysteine intermediate role is filled by C152. 153–158 (THGVNR) contributes to the substrate binding site. The active-site Proton donor/acceptor is the R158.

It belongs to the protein-tyrosine phosphatase family. Non-receptor class dual specificity subfamily. In terms of assembly, monomer. May interact with SFRS7 and SFRS9/SRP30C.

Its subcellular location is the nucleus. The protein localises to the nucleus speckle. Functionally, possesses RNA 5'-triphosphatase and diphosphatase activities, but displays a poor protein-tyrosine phosphatase activity. In addition, has phosphatase activity with ATP, ADP and O-methylfluorescein phosphate (in vitro). Binds to RNA. May participate in nuclear mRNA metabolism. This Bos taurus (Bovine) protein is RNA/RNP complex-1-interacting phosphatase (DUSP11).